We begin with the raw amino-acid sequence, 435 residues long: Serine/threonine-protein kinase 40 (435 aa).

A compositionally biased stretch (basic and acidic residues) spans 1 to 10 (MKRRASDRGA). Positions 1 to 25 (MKRRASDRGAGETSARAKALGSGIS) are disordered. The Protein kinase domain occupies 35-331 (FILGPRLGNS…ADVLEALSAI (297 aa)). ATP-binding positions include 41–49 (LGNSPVPSI) and Lys-66. Arg-196 (proton acceptor) is an active-site residue.

The protein belongs to the protein kinase superfamily. CAMK Ser/Thr protein kinase family. Strongly expressed in heart, brain, placenta, lung, skeletal muscle, kidney, spleen, thymus, prostate, liver, pancreas, testis, ovary, small intestine, colon and peripheral blood leukocytes.

Its subcellular location is the nucleus. It is found in the cytoplasm. It carries out the reaction L-seryl-[protein] + ATP = O-phospho-L-seryl-[protein] + ADP + H(+). It catalyses the reaction L-threonyl-[protein] + ATP = O-phospho-L-threonyl-[protein] + ADP + H(+). Its function is as follows. May be a negative regulator of NF-kappa-B and p53-mediated gene transcription. The polypeptide is Serine/threonine-protein kinase 40 (STK40) (Homo sapiens (Human)).